The following is a 387-amino-acid chain: Sialic acid-binding Ig-like lectin 13 (387 aa).

The signal sequence occupies residues 1 to 15; sequence MLPLLLPLLWAGALA. The 123-residue stretch at 16 to 138 folds into the Ig-like V-type domain; sequence LEGIFQLEVP…KDPPLSVHVT (123 aa). Topologically, residues 16–341 are extracellular; the sequence is LEGIFQLEVP…QRKSGPMAEV (326 aa). 3 disulfides stabilise this stretch: Cys-35-Cys-168, Cys-40-Cys-100, and Cys-162-Cys-211. An N-linked (GlcNAc...) asparagine glycan is attached at Asn-99. Position 118 (Arg-118) interacts with N-acetylneuraminate. Residues 144–227 enclose the Ig-like C2-type 1 domain; sequence PDILIPGALK…AGVTTTRTVR (84 aa). Residues Asn-229, Asn-236, and Asn-254 are each glycosylated (N-linked (GlcNAc...) asparagine). The Ig-like C2-type 2 domain occupies 234–326; it reads PQNLTLTVFQ…RNPLGSQQVS (93 aa). A disulfide bridge links Cys-270 with Cys-314. Residues 342–362 form a helical membrane-spanning segment; it reads VLVAIGEAAVKILLLFLCLII. Topologically, residues 363–387 are cytoplasmic; that stretch reads LRVKSHRRKAAKAATGVEAAKVVKG.

Belongs to the immunoglobulin superfamily. SIGLEC (sialic acid binding Ig-like lectin) family.

It is found in the membrane. Putative adhesion molecule that mediates sialic-acid dependent binding to cells. This chain is Sialic acid-binding Ig-like lectin 13 (SIGLEC13), found in Pan troglodytes (Chimpanzee).